We begin with the raw amino-acid sequence, 436 residues long: Protein 60A (436 aa).

A signal peptide spans 1 to 27 (MTASLVVLPSLWLILIIFTAPYTHCTQ). The propeptide occupies 28–317 (SGIYIDNGKD…STLHQRKKSK (290 aa)). 4 N-linked (GlcNAc...) asparagine glycosylation sites follow: Asn102, Asn114, Asn217, and Asn229. The tract at residues 293–322 (IKSTSGHSTQKRTKRSTLHQRKKSKSEPVN) is disordered. A compositionally biased stretch (basic residues) spans 301–316 (TQKRTKRSTLHQRKKS). 3 disulfides stabilise this stretch: Cys335-Cys401, Cys364-Cys433, and Cys368-Cys435. Asn377 carries N-linked (GlcNAc...) asparagine glycosylation.

Belongs to the TGF-beta family. Homodimer; disulfide-linked.

The protein resides in the secreted. This is Protein 60A (gbb) from Drosophila virilis (Fruit fly).